A 756-amino-acid chain; its full sequence is Ribonucleoside-diphosphate reductase subunit alpha (756 aa).

The region spanning 5 to 95 (LMVTKRDGTQ…IFHLRKKAYG (91 aa)) is the ATP-cone domain. Residues K9, 15-21 (EQINLDK), T55, and K91 contribute to the ATP site. Residue T209 participates in GDP binding. Residues C225 and C462 are joined by a disulfide bond. DTTP contacts are provided by residues 232–234 (DSL), R262, and R269. N437 contacts GDP. The active-site Proton acceptor is N437. The active-site Cysteine radical intermediate is the C439. GDP contacts are provided by residues E441 and 623 to 625 (ETS). E441 acts as the Proton acceptor in catalysis.

It belongs to the ribonucleoside diphosphate reductase large chain family. Tetramer of two alpha and two beta subunits.

The enzyme catalyses a 2'-deoxyribonucleoside 5'-diphosphate + [thioredoxin]-disulfide + H2O = a ribonucleoside 5'-diphosphate + [thioredoxin]-dithiol. With respect to regulation, under complex allosteric control mediated by deoxynucleoside triphosphates and ATP binding to separate specificity and activation sites on the alpha subunit. The type of nucleotide bound at the specificity site determines substrate preference. It seems probable that ATP makes the enzyme reduce CDP and UDP, dGTP favors ADP reduction and dTTP favors GDP reduction. Stimulated by ATP and inhibited by dATP binding to the activity site. Functionally, provides the precursors necessary for DNA synthesis. Catalyzes the biosynthesis of deoxyribonucleotides from the corresponding ribonucleotides. This chain is Ribonucleoside-diphosphate reductase subunit alpha (nrdA), found in Haemophilus influenzae (strain ATCC 51907 / DSM 11121 / KW20 / Rd).